Reading from the N-terminus, the 110-residue chain is METLAQHRHARSSAQKVRLVADLIRGKKVSQALDILTYTNKKAAVLVKKVLESAIANAEHNDGADIDDLKVTKIFVDEGPSMKRIMPRAKGRADRILKRTSHITVVVSDR.

This sequence belongs to the universal ribosomal protein uL22 family. As to quaternary structure, part of the 50S ribosomal subunit.

In terms of biological role, this protein binds specifically to 23S rRNA; its binding is stimulated by other ribosomal proteins, e.g. L4, L17, and L20. It is important during the early stages of 50S assembly. It makes multiple contacts with different domains of the 23S rRNA in the assembled 50S subunit and ribosome. Functionally, the globular domain of the protein is located near the polypeptide exit tunnel on the outside of the subunit, while an extended beta-hairpin is found that lines the wall of the exit tunnel in the center of the 70S ribosome. This Salmonella arizonae (strain ATCC BAA-731 / CDC346-86 / RSK2980) protein is Large ribosomal subunit protein uL22.